The sequence spans 78 residues: Short neurotoxin SNTX6 (78 aa).

The first 21 residues, methionine 1–threonine 21, serve as a signal peptide directing secretion. Disulfide bonds link cysteine 24/cysteine 40, cysteine 33/cysteine 58, cysteine 62/cysteine 70, and cysteine 71/cysteine 76.

This sequence belongs to the three-finger toxin family. Short-chain subfamily. In terms of tissue distribution, expressed by the venom gland.

It localises to the secreted. Its function is as follows. This three-finger toxin binds and inhibits the nicotinic acetylcholine receptor (nAChR). The sequence is that of Short neurotoxin SNTX6 from Ophiophagus hannah (King cobra).